Consider the following 91-residue polypeptide: Small ribosomal subunit protein uS19 (91 aa).

It belongs to the universal ribosomal protein uS19 family.

Protein S19 forms a complex with S13 that binds strongly to the 16S ribosomal RNA. The polypeptide is Small ribosomal subunit protein uS19 (Lactobacillus delbrueckii subsp. bulgaricus (strain ATCC 11842 / DSM 20081 / BCRC 10696 / JCM 1002 / NBRC 13953 / NCIMB 11778 / NCTC 12712 / WDCM 00102 / Lb 14)).